A 1212-amino-acid chain; its full sequence is DNA-directed RNA polymerase subunit beta' (1212 aa).

Positions 60, 62, 75, and 78 each coordinate Zn(2+). Residues Asp450, Asp452, and Asp454 each coordinate Mg(2+). Zn(2+)-binding residues include Cys819, Cys893, Cys900, and Cys903.

The protein belongs to the RNA polymerase beta' chain family. In terms of assembly, the RNAP catalytic core consists of 2 alpha, 1 beta, 1 beta' and 1 omega subunit. When a sigma factor is associated with the core the holoenzyme is formed, which can initiate transcription. It depends on Mg(2+) as a cofactor. Zn(2+) is required as a cofactor.

It carries out the reaction RNA(n) + a ribonucleoside 5'-triphosphate = RNA(n+1) + diphosphate. Functionally, DNA-dependent RNA polymerase catalyzes the transcription of DNA into RNA using the four ribonucleoside triphosphates as substrates. The polypeptide is DNA-directed RNA polymerase subunit beta' (Streptococcus uberis (strain ATCC BAA-854 / 0140J)).